Consider the following 135-residue polypeptide: Small ribosomal subunit protein eS6 (135 aa).

The protein belongs to the eukaryotic ribosomal protein eS6 family.

This Methanococcoides burtonii (strain DSM 6242 / NBRC 107633 / OCM 468 / ACE-M) protein is Small ribosomal subunit protein eS6.